Here is a 429-residue protein sequence, read N- to C-terminus: Trigger factor (429 aa).

Positions 161 to 246 (EDRVTIDFTG…LKKVEERELP (86 aa)) constitute a PPIase FKBP-type domain.

The protein belongs to the FKBP-type PPIase family. Tig subfamily. In terms of assembly, homodimer and monomer. In vivo most of the ribosomes are in complex with monomeric TF. Uncomplexed TF, however, is in a monomer-dimer equilibrium with approximately two thirds of TF existing in a dimeric state.

The protein resides in the cytoplasm. It carries out the reaction [protein]-peptidylproline (omega=180) = [protein]-peptidylproline (omega=0). Involved in protein export. Acts as a chaperone by maintaining the newly synthesized protein in an open conformation. Functions as a peptidyl-prolyl cis-trans isomerase. The chain is Trigger factor from Escherichia coli O45:K1 (strain S88 / ExPEC).